We begin with the raw amino-acid sequence, 411 residues long: Tyrosine--tRNA ligase (411 aa).

Tyr-34 contacts L-tyrosine. A 'HIGH' region motif is present at residues 39-48 (CTATSLHIGS). Residues Tyr-171 and Gln-175 each contribute to the L-tyrosine site. The 'KMSKS' region signature appears at 231 to 235 (KMGKT). Residue Lys-234 coordinates ATP. In terms of domain architecture, S4 RNA-binding spans 345-411 (ISAYELFHEA…GKKKHILVRV (67 aa)).

This sequence belongs to the class-I aminoacyl-tRNA synthetase family. TyrS type 1 subfamily. Homodimer.

The protein localises to the cytoplasm. It catalyses the reaction tRNA(Tyr) + L-tyrosine + ATP = L-tyrosyl-tRNA(Tyr) + AMP + diphosphate + H(+). Functionally, catalyzes the attachment of tyrosine to tRNA(Tyr) in a two-step reaction: tyrosine is first activated by ATP to form Tyr-AMP and then transferred to the acceptor end of tRNA(Tyr). This chain is Tyrosine--tRNA ligase, found in Rickettsia conorii (strain ATCC VR-613 / Malish 7).